A 465-amino-acid polypeptide reads, in one-letter code: Poly(A) polymerase I (465 aa).

Catalysis depends on residues aspartate 80, aspartate 82, and aspartate 162. Positions 430-465 (APPEQKGMLNELDDDPAPRRRRSRPRKRAPRREGTV) are disordered. Residues 448–459 (RRRRSRPRKRAP) are compositionally biased toward basic residues.

Belongs to the tRNA nucleotidyltransferase/poly(A) polymerase family.

It catalyses the reaction RNA(n) + ATP = RNA(n)-3'-adenine ribonucleotide + diphosphate. Adds poly(A) tail to the 3' end of many RNAs, which usually targets these RNAs for decay. Plays a significant role in the global control of gene expression, through influencing the rate of transcript degradation, and in the general RNA quality control. This is Poly(A) polymerase I from Salmonella typhi.